The primary structure comprises 374 residues: Alanine racemase (374 aa).

Lysine 40 (proton acceptor; specific for D-alanine) is an active-site residue. Lysine 40 bears the N6-(pyridoxal phosphate)lysine mark. Arginine 139 lines the substrate pocket. The active-site Proton acceptor; specific for L-alanine is tyrosine 261. A substrate-binding site is contributed by methionine 309.

This sequence belongs to the alanine racemase family. The cofactor is pyridoxal 5'-phosphate.

The enzyme catalyses L-alanine = D-alanine. It functions in the pathway amino-acid biosynthesis; D-alanine biosynthesis; D-alanine from L-alanine: step 1/1. Catalyzes the interconversion of L-alanine and D-alanine. May also act on other amino acids. The sequence is that of Alanine racemase (alr) from Rhodospirillum rubrum (strain ATCC 11170 / ATH 1.1.1 / DSM 467 / LMG 4362 / NCIMB 8255 / S1).